We begin with the raw amino-acid sequence, 302 residues long: Digeranylgeranylglyceryl phosphate synthase (302 aa).

The next 8 helical transmembrane spans lie at 21–41 (LVVAALTTLIGYGTVASIYGG), 43–63 (IVSSGYAYAALIVVLVAAGGY), 103–123 (IGLIIALVTCPNFIVFGFAVL), 144–164 (IVIAFNSASTIVFGALYASCM), 167–187 (GKVVLPSVALIPVLYAFLLVL), 218–238 (AYMASVAVLGLVVVLSPFPYI), 244–264 (MAYLILALVVDVLIAYSLAIL), and 282–302 (ARSALKLAFMVGALAFLAGLM).

The protein belongs to the UbiA prenyltransferase family. DGGGP synthase subfamily. Requires Mg(2+) as cofactor.

It localises to the cell membrane. It carries out the reaction sn-3-O-(geranylgeranyl)glycerol 1-phosphate + (2E,6E,10E)-geranylgeranyl diphosphate = 2,3-bis-O-(geranylgeranyl)-sn-glycerol 1-phosphate + diphosphate. It participates in membrane lipid metabolism; glycerophospholipid metabolism. In terms of biological role, prenyltransferase that catalyzes the transfer of the geranylgeranyl moiety of geranylgeranyl diphosphate (GGPP) to the C2 hydroxyl of (S)-3-O-geranylgeranylglyceryl phosphate (GGGP). This reaction is the second ether-bond-formation step in the biosynthesis of archaeal membrane lipids. The protein is Digeranylgeranylglyceryl phosphate synthase of Hyperthermus butylicus (strain DSM 5456 / JCM 9403 / PLM1-5).